The chain runs to 785 residues: B-cell scaffold protein with ankyrin repeats (785 aa).

The tract at residues Met1–Ile154 is interaction with ITPR2. Residues Asn25 to Ile153 enclose the TIR domain. Residues Val200–Leu327 form the DBB domain. ANK repeat units lie at residues Glu342 to Ala371 and Glu378 to Ile408. Disordered regions lie at residues Pro433 to Ser480, Gly493 to Pro514, Gln538 to Tyr578, and Phe606 to Glu625. Basic and acidic residues predominate over residues Glu553–Glu568. Residues Lys569–Tyr578 are compositionally biased toward acidic residues. The span at Pro611 to Ile621 shows a compositional bias: pro residues.

Interacts with LYN, ITPR1 and ITPR2. In terms of processing, phosphorylated on tyrosines upon BCR activation. Expressed in B-cell but not T-cell or myeloid cell lines. Highest expression in CD19(+) B-cells, with very low expression in other cell populations.

Involved in B-cell receptor (BCR)-induced Ca(2+) mobilization from intracellular stores. Promotes Lyn-mediated phosphorylation of IP3 receptors 1 and 2. The protein is B-cell scaffold protein with ankyrin repeats (BANK1) of Homo sapiens (Human).